A 107-amino-acid polypeptide reads, in one-letter code: Ig kappa chain V-VI region XRPC 44 (107 aa).

The interval E1–C23 is framework-1. C23 and C87 form a disulfide bridge. Residues S24 to H33 form a complementarity-determining-1 region. Positions W34–Y48 are framework-2. Residues E49–S55 form a complementarity-determining-2 region. The tract at residues G56–C87 is framework-3. The complementarity-determining-3 stretch occupies residues Q88–T96. A framework-4 region spans residues F97 to K106.

The sequence is that of Ig kappa chain V-VI region XRPC 44 from Mus musculus (Mouse).